The sequence spans 245 residues: Ribonuclease 3 (245 aa).

An RNase III domain is found at 24 to 146 (YTVFSQKLGY…IIGAIYLESG (123 aa)). Residue Glu-59 participates in Mg(2+) binding. Asp-63 is a catalytic residue. The Mg(2+) site is built by Asn-132 and Glu-135. Glu-135 is an active-site residue. In terms of domain architecture, DRBM spans 173–243 (DPKTLLQEYL…ARRAYKLAVV (71 aa)).

It belongs to the ribonuclease III family. As to quaternary structure, homodimer. Mg(2+) serves as cofactor.

It is found in the cytoplasm. It catalyses the reaction Endonucleolytic cleavage to 5'-phosphomonoester.. Functionally, digests double-stranded RNA. Involved in the processing of primary rRNA transcript to yield the immediate precursors to the large and small rRNAs (23S and 16S). Processes some mRNAs, and tRNAs when they are encoded in the rRNA operon. Processes pre-crRNA and tracrRNA of type II CRISPR loci if present in the organism. This chain is Ribonuclease 3, found in Nitrosomonas eutropha (strain DSM 101675 / C91 / Nm57).